Reading from the N-terminus, the 96-residue chain is Cytochrome c-553 (96 aa).

A signal peptide spans 1–19 (MKKVIVALGVLAFANVLMA). Residues C29, C32, H33, and M73 each contribute to the heme c site.

It belongs to the cytochrome c family. Post-translationally, binds 1 heme c group covalently per subunit.

It is found in the periplasm. Its function is as follows. Natural electron acceptor for a formate dehydrogenase. The chain is Cytochrome c-553 from Helicobacter pylori (strain J99 / ATCC 700824) (Campylobacter pylori J99).